The primary structure comprises 276 residues: S-adenosylmethionine decarboxylase proenzyme (276 aa).

Serine 124 functions as the Schiff-base intermediate with substrate; via pyruvic acid in the catalytic mechanism. Serine 124 is subject to Pyruvic acid (Ser); by autocatalysis. Residue histidine 129 is the Proton acceptor; for processing activity of the active site. Catalysis depends on cysteine 152, which acts as the Proton donor; for catalytic activity.

This sequence belongs to the prokaryotic AdoMetDC family. Type 2 subfamily. As to quaternary structure, heterooctamer of four alpha and four beta chains arranged as a tetramer of alpha/beta heterodimers. It depends on pyruvate as a cofactor. In terms of processing, is synthesized initially as an inactive proenzyme. Formation of the active enzyme involves a self-maturation process in which the active site pyruvoyl group is generated from an internal serine residue via an autocatalytic post-translational modification. Two non-identical subunits are generated from the proenzyme in this reaction, and the pyruvate is formed at the N-terminus of the alpha chain, which is derived from the carboxyl end of the proenzyme. The post-translation cleavage follows an unusual pathway, termed non-hydrolytic serinolysis, in which the side chain hydroxyl group of the serine supplies its oxygen atom to form the C-terminus of the beta chain, while the remainder of the serine residue undergoes an oxidative deamination to produce ammonia and the pyruvoyl group blocking the N-terminus of the alpha chain.

It catalyses the reaction S-adenosyl-L-methionine + H(+) = S-adenosyl 3-(methylsulfanyl)propylamine + CO2. It participates in amine and polyamine biosynthesis; S-adenosylmethioninamine biosynthesis; S-adenosylmethioninamine from S-adenosyl-L-methionine: step 1/1. Catalyzes the decarboxylation of S-adenosylmethionine to S-adenosylmethioninamine (dcAdoMet), the propylamine donor required for the synthesis of the polyamines spermine and spermidine from the diamine putrescine. The polypeptide is S-adenosylmethionine decarboxylase proenzyme (Desulfitobacterium hafniense (strain DSM 10664 / DCB-2)).